The sequence spans 304 residues: Glutaminase (304 aa).

The substrate site is built by Ser63, Asn113, Glu157, Asn164, Tyr188, Tyr240, and Val258.

It belongs to the glutaminase family. Homotetramer.

The enzyme catalyses L-glutamine + H2O = L-glutamate + NH4(+). This Christiangramia forsetii (strain DSM 17595 / CGMCC 1.15422 / KT0803) (Gramella forsetii) protein is Glutaminase.